The primary structure comprises 261 residues: MTHQTHAYHMVNPSPWPLTGAFSALLLTSGLVMWFHYNSITLLTLGLLTNILTMYQWWRDVIREGTYQGHHTPIVQKGLRYGMILFIVSEVFFFAGFFWAFYHSSLVPTHDLGGCWPPTGISPLNPLEVPLLNTSVLLASGVSITWAHHSLMEGKRNHMNQALLITIMLGLYFTILQASEYFETSFSISDGIYGSTFFMATGFHGLHVIIGSTFLIVCLLRQLKFHFTSKHHFGFEAAAWYWHFVDVVWLFLYVSIYWWGS.

Topologically, residues 1 to 15 are mitochondrial matrix; it reads MTHQTHAYHMVNPSP. Residues 16–33 form a helical membrane-spanning segment; sequence WPLTGAFSALLLTSGLVM. The Mitochondrial intermembrane segment spans residues 34–38; the sequence is WFHYN. Residues 39–62 traverse the membrane as a helical segment; sequence SITLLTLGLLTNILTMYQWWRDVI. At 63–77 the chain is on the mitochondrial matrix side; the sequence is REGTYQGHHTPIVQK. A helical membrane pass occupies residues 78-99; sequence GLRYGMILFIVSEVFFFAGFFW. The Mitochondrial intermembrane portion of the chain corresponds to 100–129; that stretch reads AFYHSSLVPTHDLGGCWPPTGISPLNPLEV. A helical transmembrane segment spans residues 130–150; sequence PLLNTSVLLASGVSITWAHHS. Topologically, residues 151–156 are mitochondrial matrix; it reads LMEGKR. Residues 157 to 178 traverse the membrane as a helical segment; it reads NHMNQALLITIMLGLYFTILQA. Topologically, residues 179–198 are mitochondrial intermembrane; sequence SEYFETSFSISDGIYGSTFF. Residues 199 to 224 form a helical membrane-spanning segment; that stretch reads MATGFHGLHVIIGSTFLIVCLLRQLK. The Mitochondrial matrix portion of the chain corresponds to 225 to 232; it reads FHFTSKHH. A helical membrane pass occupies residues 233–255; that stretch reads FGFEAAAWYWHFVDVVWLFLYVS. The Mitochondrial intermembrane segment spans residues 256 to 261; sequence IYWWGS.

This sequence belongs to the cytochrome c oxidase subunit 3 family. Component of the cytochrome c oxidase (complex IV, CIV), a multisubunit enzyme composed of 14 subunits. The complex is composed of a catalytic core of 3 subunits MT-CO1, MT-CO2 and MT-CO3, encoded in the mitochondrial DNA, and 11 supernumerary subunits COX4I, COX5A, COX5B, COX6A, COX6B, COX6C, COX7A, COX7B, COX7C, COX8 and NDUFA4, which are encoded in the nuclear genome. The complex exists as a monomer or a dimer and forms supercomplexes (SCs) in the inner mitochondrial membrane with NADH-ubiquinone oxidoreductase (complex I, CI) and ubiquinol-cytochrome c oxidoreductase (cytochrome b-c1 complex, complex III, CIII), resulting in different assemblies (supercomplex SCI(1)III(2)IV(1) and megacomplex MCI(2)III(2)IV(2)).

Its subcellular location is the mitochondrion inner membrane. The catalysed reaction is 4 Fe(II)-[cytochrome c] + O2 + 8 H(+)(in) = 4 Fe(III)-[cytochrome c] + 2 H2O + 4 H(+)(out). Its function is as follows. Component of the cytochrome c oxidase, the last enzyme in the mitochondrial electron transport chain which drives oxidative phosphorylation. The respiratory chain contains 3 multisubunit complexes succinate dehydrogenase (complex II, CII), ubiquinol-cytochrome c oxidoreductase (cytochrome b-c1 complex, complex III, CIII) and cytochrome c oxidase (complex IV, CIV), that cooperate to transfer electrons derived from NADH and succinate to molecular oxygen, creating an electrochemical gradient over the inner membrane that drives transmembrane transport and the ATP synthase. Cytochrome c oxidase is the component of the respiratory chain that catalyzes the reduction of oxygen to water. Electrons originating from reduced cytochrome c in the intermembrane space (IMS) are transferred via the dinuclear copper A center (CU(A)) of subunit 2 and heme A of subunit 1 to the active site in subunit 1, a binuclear center (BNC) formed by heme A3 and copper B (CU(B)). The BNC reduces molecular oxygen to 2 water molecules using 4 electrons from cytochrome c in the IMS and 4 protons from the mitochondrial matrix. This is Cytochrome c oxidase subunit 3 (mt-Co3) from Mus musculus (Mouse).